A 1006-amino-acid chain; its full sequence is DNA polymerase (1006 aa).

Belongs to the DNA polymerase type-B family. As to quaternary structure, interacts with OPG148/A20. Component of the Uracil-DNA glycosylase(UDG)-OPG148/A20-polymerase complex; OPG148/A20 and OPG116/UDG form a heterodimeric processivity factor that associates with OPG071/E9 to form the processive polymerase holoenzyme.

It carries out the reaction DNA(n) + a 2'-deoxyribonucleoside 5'-triphosphate = DNA(n+1) + diphosphate. Catalyzes DNA synthesis. Acquires processivity by associating with a heterodimeric processivity factor comprised of the viral OPG148/A20 and OPG116/D4 proteins, thereby forming the DNA polymerase holoenzyme. Displays 3'- to 5' exonuclease activity. Might participate in viral DNA recombination. Does not perform OPG116/D4synthesis across an abasic site. This chain is DNA polymerase (OPG071), found in Bos taurus (Bovine).